The following is a 473-amino-acid chain: Histone-lysine N-methyltransferase ATXR2 (473 aa).

Residues 33 to 441 form the SET domain; that stretch reads KLITSRRCNG…KNEEVTISYI (409 aa). An MYND-type; degenerate zinc finger spans residues 134–203; that stretch reads EEQCGGSSSS…DWESSHSLLC (70 aa). Residues Cys176, Cys180, His199, and Cys203 each contribute to the Zn(2+) site. Tyr440 serves as a coordination point for S-adenosyl-L-methionine.

The protein belongs to the class V-like SAM-binding methyltransferase superfamily. Histone-lysine methyltransferase family. TRX/MLL subfamily. In terms of assembly, interacts with JMJ30. Binds to ARF7 and ARF19 in the nucleus.

It is found in the nucleus. The enzyme catalyses L-lysyl-[histone] + S-adenosyl-L-methionine = N(6)-methyl-L-lysyl-[histone] + S-adenosyl-L-homocysteine + H(+). In terms of biological role, histone methyltransferase that methylates 'Lys-36' (H3K36me) of histone H3 to produce H3K36me3. Promotes early stages of cellular dedifferentiation through H3K36me3-dependent, and to a lesser degree H3K4me3-dependent, activation of Lateral organ Boundaries-Domain (LBD) (e.g. LBD16 and LBD29) genes. Positive regulator of root organogenesis including lateral root formation as well as adventitious root formation from wounded leaf tissues. Recruited by JMJ30/ARF (e.g. ARF7 and ARF19) complexes to promote the deposition of H3K36me3 and, to a lower extent, H3K4me3 at LBD genes promoters, thus ensuring their stable activation during callus formation on callus-inducing medium (CIM). The chain is Histone-lysine N-methyltransferase ATXR2 from Arabidopsis thaliana (Mouse-ear cress).